A 638-amino-acid polypeptide reads, in one-letter code: Plasma kallikrein (638 aa).

An N-terminal signal peptide occupies residues 1-19 (MILFKQVGYFVSLFATVSC). Apple domains follow at residues 21-104 (CLSQ…LKQC), 111-194 (CHQD…LKSC), 201-284 (CPMD…LFTC), and 292-375 (CHFK…LRLC). 18 cysteine pairs are disulfide-bonded: cysteine 21–cysteine 104, cysteine 47–cysteine 77, cysteine 51–cysteine 57, cysteine 111–cysteine 194, cysteine 137–cysteine 166, cysteine 141–cysteine 147, cysteine 201–cysteine 284, cysteine 227–cysteine 256, cysteine 231–cysteine 237, cysteine 292–cysteine 375, cysteine 318–cysteine 347, cysteine 322–cysteine 328, cysteine 340–cysteine 345, cysteine 383–cysteine 503, cysteine 419–cysteine 435, cysteine 517–cysteine 584, cysteine 548–cysteine 563, and cysteine 574–cysteine 602. N-linked (GlcNAc...) asparagine glycosylation is present at asparagine 127. N-linked (GlcNAc...) asparagine glycosylation occurs at asparagine 215. A glycan (N-linked (GlcNAc...) asparagine) is linked at asparagine 308. In terms of domain architecture, Peptidase S1 spans 391–626 (IVGGTNSSLG…YIDWILEKIQ (236 aa)). The N-linked (GlcNAc...) asparagine glycan is linked to asparagine 396. Residue histidine 434 is the Charge relay system of the active site. A glycan (N-linked (GlcNAc...) asparagine) is linked at asparagine 453. Aspartate 483 functions as the Charge relay system in the catalytic mechanism. Residue asparagine 494 is glycosylated (N-linked (GlcNAc...) asparagine). Serine 578 serves as the catalytic Charge relay system.

It belongs to the peptidase S1 family. Plasma kallikrein subfamily. As to quaternary structure, forms a heterodimer with SERPINA5. The zymogen is activated by factor XIIa, which cleaves the molecule into a light chain, which contains the active site, and a heavy chain, which associates with HMW kininogen. These chains are linked by one or more disulfide bonds.

The protein resides in the secreted. The catalysed reaction is Cleaves selectively Arg-|-Xaa and Lys-|-Xaa bonds, including Lys-|-Arg and Arg-|-Ser bonds in (human) kininogen to release bradykinin.. Its activity is regulated as follows. Inhibited by SERPINA5. Its function is as follows. The enzyme cleaves Lys-Arg and Arg-Ser bonds. It activates, in a reciprocal reaction, factor XII after its binding to a negatively charged surface. It also releases bradykinin from HMW kininogen and may also play a role in the renin-angiotensin system by converting prorenin into renin. This chain is Plasma kallikrein (Klkb1), found in Rattus norvegicus (Rat).